Here is a 100-residue protein sequence, read N- to C-terminus: ATP-dependent Clp protease adapter protein ClpS (100 aa).

The protein belongs to the ClpS family. In terms of assembly, binds to the N-terminal domain of the chaperone ClpA.

Involved in the modulation of the specificity of the ClpAP-mediated ATP-dependent protein degradation. The chain is ATP-dependent Clp protease adapter protein ClpS from Nitratidesulfovibrio vulgaris (strain DSM 19637 / Miyazaki F) (Desulfovibrio vulgaris).